Reading from the N-terminus, the 354-residue chain is Methionine import ATP-binding protein MetN (354 aa).

Residues L8–I250 enclose the ABC transporter domain. G42–S49 lines the ATP pocket.

The protein belongs to the ABC transporter superfamily. Methionine importer (TC 3.A.1.24) family. As to quaternary structure, the complex is composed of two ATP-binding proteins (MetN), two transmembrane proteins (MetI) and a solute-binding protein (MetQ).

The protein resides in the cell membrane. It catalyses the reaction L-methionine(out) + ATP + H2O = L-methionine(in) + ADP + phosphate + H(+). The enzyme catalyses D-methionine(out) + ATP + H2O = D-methionine(in) + ADP + phosphate + H(+). Part of the ABC transporter complex MetNIQ involved in methionine import. Responsible for energy coupling to the transport system. The sequence is that of Methionine import ATP-binding protein MetN from Streptococcus pyogenes serotype M6 (strain ATCC BAA-946 / MGAS10394).